We begin with the raw amino-acid sequence, 639 residues long: Protein zwilch homolog (639 aa).

The segment covering 76–95 (QKTSSLLNRRENKKTIKSEK) has biased composition (basic and acidic residues). Residues 76–116 (QKTSSLLNRRENKKTIKSEKEDESMDMETAEGDKENTVSET) form a disordered region. Residues 96–105 (EDESMDMETA) show a composition bias toward acidic residues.

Belongs to the ZWILCH family. As to quaternary structure, component of the RZZ complex composed of rod-1, czw-1 and zwl-1. Interacts with the spindly-like protein spdl-1. Interacts with NDC80 complex component ndc-80.

It localises to the cytoplasm. The protein localises to the cell cortex. Its subcellular location is the chromosome. The protein resides in the centromere. It is found in the kinetochore. It localises to the cytoskeleton. The protein localises to the spindle. Essential component of the mitotic checkpoint, which prevents cells from prematurely exiting mitosis. Required for chromosome segregation, the assembly of the dynein-dynactin and mdf-1-mdf-2 complexes onto kinetochores and spindle pole separation. Its function related to the spindle assembly machinery and kinetochore-microtubule attachments likely depends on its association in the mitotic RZZ complex. The RZZ complex recruits the spindly-like protein spdl-1 to kinetochores. To prevent irregular chromosome segregation, the complex also inhibits the attachment of the kinetochore-associated NDC80 complex to microtubules. The recruitment of spdl-1 to kinetochores relieves this inhibition. Required for embryonic development. The protein is Protein zwilch homolog (zwl-1) of Caenorhabditis briggsae.